The chain runs to 227 residues: MQFSLSAIVLGLAATVYALPPSAPVAGGAGAGNGVGNKGNTDVRFSVPDNLTVKQAQAKCGDQAQLSCCNKAVYAGDTTDINSGILGGTLSNLIGSGSGASGLGLFDQCSKLDLQVPILALLPIQDLVNQKCKQNIACCQNSPSSAVSTPPIIDQKAQLTHHRTPTSLVLASPVLPLAPSSKRLAMFSRIMQAALVITPALWTLVQSSTYAEMWIVIDSEDGKQAFD.

Positions 1–18 (MQFSLSAIVLGLAATVYA) are cleaved as a signal peptide. N-linked (GlcNAc...) asparagine glycosylation is present at Asn-50. 3 cysteine pairs are disulfide-bonded: Cys-60-Cys-138, Cys-68-Cys-132, and Cys-69-Cys-109.

This sequence belongs to the fungal hydrophobin family.

Its subcellular location is the secreted. The protein localises to the cell wall. Its function is as follows. Aerial growth, conidiation, and dispersal of filamentous fungi in the environment rely upon a capability of their secreting small amphipathic proteins called hydrophobins (HPBs) with low sequence identity. Class I can self-assemble into an outermost layer of rodlet bundles on aerial cell surfaces, conferring cellular hydrophobicity that supports fungal growth, development and dispersal; whereas Class II form highly ordered films at water-air interfaces through intermolecular interactions but contribute nothing to the rodlet structure. In P.expansum, hydrophobins contribute to germination, tolerance to cold stress and mycotoxins patulin and citrinin production. HfbA and HfbB are essential for fungal surface hydrophobicity and HfbA mediates air and water dispersal. The sequence is that of Class I hydrophobin A from Penicillium expansum (Blue mold rot fungus).